The chain runs to 189 residues: MALSFSLLMAVLVLSYKSICSLGCDLPQTHSLGNRRALILLAQMGRISHFSCLKDRHDFGFPEEEFDGHQFQKAQAISVLHEMIQQTFNLFSTEDSSAAWEQSLLEKFSTELYQQLNDLEACVIQEVGVEETPLMNEDSILAVRKYFQRITLYLTEKKYSPCAWEVVRAEIMRSLSFSTNLQKRLRRKD.

Residues 1–23 form the signal peptide; sequence MALSFSLLMAVLVLSYKSICSLG. 2 cysteine pairs are disulfide-bonded: Cys24–Cys122 and Cys52–Cys162.

It belongs to the alpha/beta interferon family.

The protein localises to the secreted. Functionally, produced by macrophages, IFN-alpha have antiviral activities. Interferon stimulates the production of two enzymes: a protein kinase and an oligoadenylate synthetase. The chain is Interferon alpha-4 (IFNA4) from Homo sapiens (Human).